The chain runs to 874 residues: Valine--tRNA ligase (874 aa).

Polar residues predominate over residues 1–10; the sequence is MTENSQQQPP. Residues 1–23 form a disordered region; it reads MTENSQQQPPASEPELPTQYAPA. The 'HIGH' region motif lies at 57 to 67; sequence PNVTGSLHLGH. The 'KMSKS' region motif lies at 531–535; the sequence is KMSKS. Lysine 534 lines the ATP pocket. The stretch at 806 to 871 forms a coiled coil; it reads IDIVAERKRL…ARIQAQLDRM (66 aa).

This sequence belongs to the class-I aminoacyl-tRNA synthetase family. ValS type 1 subfamily. Monomer.

Its subcellular location is the cytoplasm. It catalyses the reaction tRNA(Val) + L-valine + ATP = L-valyl-tRNA(Val) + AMP + diphosphate. Functionally, catalyzes the attachment of valine to tRNA(Val). As ValRS can inadvertently accommodate and process structurally similar amino acids such as threonine, to avoid such errors, it has a 'posttransfer' editing activity that hydrolyzes mischarged Thr-tRNA(Val) in a tRNA-dependent manner. The polypeptide is Valine--tRNA ligase (Streptomyces avermitilis (strain ATCC 31267 / DSM 46492 / JCM 5070 / NBRC 14893 / NCIMB 12804 / NRRL 8165 / MA-4680)).